Consider the following 375-residue polypeptide: Succinyl-diaminopimelate desuccinylase (375 aa).

H66 is a Zn(2+) binding site. D68 is an active-site residue. D99 is a Zn(2+) binding site. The active-site Proton acceptor is the E133. E134, E162, and H348 together coordinate Zn(2+).

It belongs to the peptidase M20A family. DapE subfamily. Homodimer. Requires Zn(2+) as cofactor. Co(2+) is required as a cofactor.

It carries out the reaction N-succinyl-(2S,6S)-2,6-diaminopimelate + H2O = (2S,6S)-2,6-diaminopimelate + succinate. It functions in the pathway amino-acid biosynthesis; L-lysine biosynthesis via DAP pathway; LL-2,6-diaminopimelate from (S)-tetrahydrodipicolinate (succinylase route): step 3/3. Functionally, catalyzes the hydrolysis of N-succinyl-L,L-diaminopimelic acid (SDAP), forming succinate and LL-2,6-diaminopimelate (DAP), an intermediate involved in the bacterial biosynthesis of lysine and meso-diaminopimelic acid, an essential component of bacterial cell walls. This Pectobacterium atrosepticum (strain SCRI 1043 / ATCC BAA-672) (Erwinia carotovora subsp. atroseptica) protein is Succinyl-diaminopimelate desuccinylase.